A 628-amino-acid chain; its full sequence is Chaperone protein HtpG (628 aa).

Residues 1–333 form an a; substrate-binding region; that stretch reads MTTDTKATET…SADLPLNVSR (333 aa). Positions 334–549 are b; that stretch reads EMIQESPLLA…EHGPDRQFER (216 aa). A c region spans residues 550 to 628; the sequence is LMNAAGRLDK…RLIARGIAKG (79 aa).

This sequence belongs to the heat shock protein 90 family. In terms of assembly, homodimer.

The protein resides in the cytoplasm. Functionally, molecular chaperone. Has ATPase activity. The protein is Chaperone protein HtpG of Mesorhizobium japonicum (strain LMG 29417 / CECT 9101 / MAFF 303099) (Mesorhizobium loti (strain MAFF 303099)).